A 146-amino-acid polypeptide reads, in one-letter code: Hemoglobin subunit beta (146 aa).

N-acetylvaline is present on V1. The Globin domain maps to 2–146 (HLTADEKAAV…VATALAHKYH (145 aa)). A Phosphothreonine modification is found at T12. At S44 the chain carries Phosphoserine. K59 is modified (N6-acetyllysine). Heme b is bound at residue H63. At K82 the chain carries N6-acetyllysine. H92 provides a ligand contact to heme b. C93 carries the post-translational modification S-nitrosocysteine. K144 is modified (N6-acetyllysine).

It belongs to the globin family. In terms of assembly, heterotetramer of two alpha chains and two beta chains. In terms of tissue distribution, red blood cells.

Involved in oxygen transport from the lung to the various peripheral tissues. The sequence is that of Hemoglobin subunit beta (HBB) from Cephalopachus bancanus (Western tarsier).